The sequence spans 400 residues: 3-phenylpropionate/cinnamic acid dioxygenase ferredoxin--NAD(+) reductase component (400 aa).

Threonine 5–aspartate 36 serves as a coordination point for FAD. Serine 146 to glutamate 174 is a binding site for NAD(+).

It belongs to the bacterial ring-hydroxylating dioxygenase ferredoxin reductase family. In terms of assembly, this dioxygenase system consists of four proteins: the two subunits of the hydroxylase component (HcaE and HcaF), a ferredoxin (HcaC) and a ferredoxin reductase (HcaD). Requires FAD as cofactor.

It carries out the reaction 2 reduced [2Fe-2S]-[ferredoxin] + NAD(+) + H(+) = 2 oxidized [2Fe-2S]-[ferredoxin] + NADH. It functions in the pathway aromatic compound metabolism; 3-phenylpropanoate degradation. In terms of biological role, part of the multicomponent 3-phenylpropionate dioxygenase, that converts 3-phenylpropionic acid (PP) and cinnamic acid (CI) into 3-phenylpropionate-dihydrodiol (PP-dihydrodiol) and cinnamic acid-dihydrodiol (CI-dihydrodiol), respectively. This chain is 3-phenylpropionate/cinnamic acid dioxygenase ferredoxin--NAD(+) reductase component, found in Escherichia coli (strain K12 / MC4100 / BW2952).